We begin with the raw amino-acid sequence, 1095 residues long: MAEGAAGREDPAPPDAAGGEDDPRVGPDAAGDCVTAASGGRMRDRRSGVALPGAAGTPADSEAGLLEAARATPRRSSIIKDPSNQKCGGRKKTVSFSSMPSEKKISSANDCISFMQAGCELKKVRPNSRIYNRFFTLDTDLQALRWEPSKKDLEKAKLDISAIKEIRLGKNTETFRNNGLADQICEDCAFSILHGENYESLDLVANSADVANIWVSGLRYLVSRSKQPLDFMEGNQNTPRFMWLKTVFEAADVDGNGIMLEDTSVELIKQLNPTLKEAKIRLKFKEIQKSKEKLTTRVTEEEFCEAFCELCTRPEVYFLLVQISKNKEYLDANDLMLFLEAEQGVTHITEDICLDIIRRYELSEEGRQKGFLAIDGFTQYLLSSECDIFDPEQKKVAQDMTQPLSHYYINASHNTYLIEDQFRGPADINGYIRALKMGCRSVELDVSDGSDNEPILCNRNNMTTHVSFRSVIEVINKFAFVASEYPLILCLGNHCSLPQQKVMAQQMKKVFGNKLYTEAPLPSESYLPSPEKLKRMIIVKGKKLPSDPDVLEGEVTDEDEEAEMSRRMSVDYNGEQKQIRLCRELSDLVSICKSVQYRDFELSMKSQNYWEMCSFSETEASRIANEYPEDFVNYNKKFLSRIYPSAMRIDSSNLNPQDFWNCGCQIVAMNFQTPGPMMDLHTGWFLQNGGCGYVLRPSIMRDEVSYFSANTKGILPGVSPLALHIKIISGQNFPKPKGACAKGDVIDPYVCIEIHGIPADCSEQRTKTVQQNSDNPIFDETFEFQVNLPELAMIRFVVLDDDYIGDEFIGQYTIPFECLQPGYRHVPLRSFVGDIMEHVTLFVHIAITNRSGGGKAQKRSLSVRMGKKVREYTMLRNIGLKTIDDIFKIAVHPLREAIDMRENMQNAIVSIKELCGLPPIASLKQCLLTLSSRLITSDNTPSVSLVMKDSFPYLEPLGAIPDVQKKMLTAYDLMIQESRFLIEMADTVQEKIVQCQKAGMEFHEELHNLGAKEGLKGRKLNKATESFAWNITVLKGQGDLLKNAKNEAIENMKQIQLACLSCGLSKAPSSSAEAKSKRSLEAIEEKESSEENGKL.

Residues 1 to 11 (MAEGAAGREDP) are compositionally biased toward basic and acidic residues. The disordered stretch occupies residues 1 to 61 (MAEGAAGRED…PGAAGTPADS (61 aa)). A phosphoserine mark is found at serine 47 and serine 77. Residues 83-222 (SNQKCGGRKK…IWVSGLRYLV (140 aa)) are interaction with PPP1C. The residue at position 93 (threonine 93) is a Phosphothreonine; by PKA. Phosphoserine is present on serine 95. The region spanning 113–223 (SFMQAGCELK…WVSGLRYLVS (111 aa)) is the PH domain. Positions 398–542 (QDMTQPLSHY…LKRMIIVKGK (145 aa)) constitute a PI-PLC X-box domain. An interaction with GABA A beta subunit region spans residues 543–567 (KLPSDPDVLEGEVTDEDEEAEMSRR). The residue at position 556 (threonine 556) is a Phosphothreonine. Residue serine 569 is modified to Phosphoserine. Residues 585 to 701 (LSDLVSICKS…GYVLRPSIMR (117 aa)) form the PI-PLC Y-box domain. Residues 701–830 (RDEVSYFSAN…PGYRHVPLRS (130 aa)) form the C2 domain. Coiled coils occupy residues 894-914 (LREA…IKEL) and 1034-1059 (LKGQ…QLAC). The disordered stretch occupies residues 1066 to 1095 (KAPSSSAEAKSKRSLEAIEEKESSEENGKL). Basic and acidic residues predominate over residues 1074–1095 (AKSKRSLEAIEEKESSEENGKL). Serine 1079 carries the post-translational modification Phosphoserine.

As to quaternary structure, interacts with PPP2CA. Interacts with Ins(1,4,5)P3, Ins(1,4,5,6)P4, GABARAP, GABA receptor beta subunits, GABA receptor gamma-2 subunits and PPP1C. May form a ternary complex with GABA receptor beta subunit and GABARAP. The formation of a ternary complex with GABA receptor beta subunit and GABARAP could be the key step for facilitating the association of GABARAP with the GABA receptor gamma-2 subunit and to allow it to be transported at the right destination. In terms of processing, phosphorylated by the catalytic subunit of PKA. Phosphorylation of Thr-93 resulted in dissociation of PPP1C from PRIP1. In terms of tissue distribution, expressed in a variety of fetal and adult organs including brain, lung and kidney. Its expression was greatly reduced in small and non-small cell lung carcinoma. Isoform 1 is predominantly expressed in brain.

Its subcellular location is the cytoplasm. In terms of biological role, involved in an inositol phospholipid-based intracellular signaling cascade. Shows no PLC activity to phosphatidylinositol 4,5-bisphosphate and phosphatidylinositol. Component in the phospho-dependent endocytosis process of GABA A receptor. Regulates the turnover of receptors and thus contributes to the maintenance of GABA-mediated synaptic inhibition. Its aberrant expression could contribute to the genesis and progression of lung carcinoma. Acts as an inhibitor of PPP1C. This chain is Inactive phospholipase C-like protein 1 (PLCL1), found in Homo sapiens (Human).